The sequence spans 128 residues: RutC family protein BUsg_359 (128 aa).

Belongs to the RutC family.

The chain is RutC family protein BUsg_359 from Buchnera aphidicola subsp. Schizaphis graminum (strain Sg).